A 355-amino-acid polypeptide reads, in one-letter code: uncharacterized protein (355 aa).

The first 21 residues, 1-21, serve as a signal peptide directing secretion; sequence MQKKVLFNDIVFVCFPITDNG. Residues N20, N78, N87, N156, N159, and N274 are each glycosylated (N-linked (GlcNAc...) asparagine; by host). Topologically, residues 22 to 331 are virion surface; sequence SIIISDIGYS…SSTSFFSRYG (310 aa). The interval 288–317 is disordered; sequence GSKSTPNGPNGPTPTPSNGPNGPTPVPGIP. Pro residues predominate over residues 296–317; it reads PNGPTPTPSNGPNGPTPVPGIP. N320 carries an N-linked (GlcNAc...) asparagine; by host glycan. A helical transmembrane segment spans residues 332-352; the sequence is LWIIIAIILLIVIISAVGIYF. Residues 353–355 lie on the Intravirion side of the membrane; it reads YLR.

The protein localises to the host membrane. The protein resides in the virion. This is an uncharacterized protein from Acanthamoeba polyphaga mimivirus (APMV).